The chain runs to 93 residues: Small ribosomal subunit protein bS18 (93 aa).

The protein belongs to the bacterial ribosomal protein bS18 family. Part of the 30S ribosomal subunit. Forms a tight heterodimer with protein bS6.

Functionally, binds as a heterodimer with protein bS6 to the central domain of the 16S rRNA, where it helps stabilize the platform of the 30S subunit. This is Small ribosomal subunit protein bS18 from Verminephrobacter eiseniae (strain EF01-2).